Consider the following 1083-residue polypeptide: Rho GTPase-activating protein 39 (1083 aa).

N-acetylserine is present on Ser-2. WW domains follow at residues 25–58 and 63–97; these read NTRL…PPAG and RTSE…RPQG. The segment at 110–154 is disordered; sequence KQNTESPRASAESSPGRGSSVSREGSTSSSLEPEPDTEKAQELPA. The segment covering 117 to 141 has biased composition (low complexity); sequence RASAESSPGRGSSVSREGSTSSSLE. Ser-169 is modified (phosphoserine). The interval 226–369 is disordered; sequence AAQGNGYAPD…NKQGPPSPCQ (144 aa). Positions 245–256 are enriched in polar residues; sequence PSGSQHSPSLQT. Residues 268–280 show a composition bias toward basic and acidic residues; sequence PERRPSPFLKRAE. 5 positions are modified to phosphoserine: Ser-286, Ser-384, Ser-388, Ser-406, and Ser-407. Disordered regions lie at residues 405 to 545 and 570 to 599; these read GSSP…EAEG and MKQR…PGPV. Polar residues-rich tracts occupy residues 474-488 and 573-582; these read SWSS…TGYS and RSSWDSQQDG. A phosphoserine mark is found at Ser-604, Ser-690, Ser-715, and Ser-726. Residues 722-879 enclose the MyTH4 domain; that stretch reads WSSESIKKPM…PNVEEIRHAK (158 aa). The Rho-GAP domain occupies 890–1078; sequence SALQEVMGMQ…VLIQHLDTSF (189 aa).

The protein localises to the nucleus. This chain is Rho GTPase-activating protein 39 (ARHGAP39), found in Homo sapiens (Human).